The sequence spans 226 residues: ATP synthase F(0) complex subunit a (226 aa).

The next 6 membrane-spanning stretches (helical) occupy residues 5-25 (LFASFIAPTILGLPAAVLIIL), 68-88 (WSLMLMWLIIFIATTNLLGLL), 97-117 (QLSMNLAMAIPLWAGAVTTGF), 138-158 (IPMLVIIETISLFIQPMALAV), 160-180 (LTANITAGHLLMHLIGSATLA), and 189-209 (TLIIFTVLILLTMLEIAVALI).

The protein belongs to the ATPase A chain family. Component of the ATP synthase complex composed at least of ATP5F1A/subunit alpha, ATP5F1B/subunit beta, ATP5MC1/subunit c (homooctomer), MT-ATP6/subunit a, MT-ATP8/subunit 8, ATP5ME/subunit e, ATP5MF/subunit f, ATP5MG/subunit g, ATP5MK/subunit k, ATP5MJ/subunit j, ATP5F1C/subunit gamma, ATP5F1D/subunit delta, ATP5F1E/subunit epsilon, ATP5PF/subunit F6, ATP5PB/subunit b, ATP5PD/subunit d, ATP5PO/subunit OSCP. ATP synthase complex consists of a soluble F(1) head domain (subunits alpha(3) and beta(3)) - the catalytic core - and a membrane F(0) domain - the membrane proton channel (subunits c, a, 8, e, f, g, k and j). These two domains are linked by a central stalk (subunits gamma, delta, and epsilon) rotating inside the F1 region and a stationary peripheral stalk (subunits F6, b, d, and OSCP). Interacts with DNAJC30; interaction is direct.

It localises to the mitochondrion inner membrane. The enzyme catalyses H(+)(in) = H(+)(out). Functionally, subunit a, of the mitochondrial membrane ATP synthase complex (F(1)F(0) ATP synthase or Complex V) that produces ATP from ADP in the presence of a proton gradient across the membrane which is generated by electron transport complexes of the respiratory chain. ATP synthase complex consist of a soluble F(1) head domain - the catalytic core - and a membrane F(1) domain - the membrane proton channel. These two domains are linked by a central stalk rotating inside the F(1) region and a stationary peripheral stalk. During catalysis, ATP synthesis in the catalytic domain of F(1) is coupled via a rotary mechanism of the central stalk subunits to proton translocation. With the subunit c (ATP5MC1), forms the proton-conducting channel in the F(0) domain, that contains two crucial half-channels (inlet and outlet) that facilitate proton movement from the mitochondrial intermembrane space (IMS) into the matrix. Protons are taken up via the inlet half-channel and released through the outlet half-channel, following a Grotthuss mechanism. This is ATP synthase F(0) complex subunit a from Gorilla gorilla gorilla (Western lowland gorilla).